Reading from the N-terminus, the 538-residue chain is Cytochrome P450 monooxygenase claO (538 aa).

The next 2 membrane-spanning stretches (helical) occupy residues 7 to 27 and 222 to 242; these read IGAF…KLVG and INPS…PILL. C475 provides a ligand contact to heme.

The protein belongs to the cytochrome P450 family. Heme serves as cofactor.

Its subcellular location is the membrane. The protein operates within secondary metabolite biosynthesis; terpenoid biosynthesis. Functionally, cytochrome P450 monooxygenase; part of the gene cluster that mediates the biosynthesis of clavilactone A, a meroterpenoid that features a unique benzo-fused ten-membered carbocyclic ring unit with an alpha,beta-epoxy-gamma-lactone moiety, forming an intriguing 10/5/3 tricyclic nested skeleton. Cytochrome P450 monooxygenases claO, claP, claQ, claU, and claW are close orthologs, suggesting that a redundant function or pseudogenes are present in the cla cluster. These monoxygenases are not involved in clavilactone A biosynthesis nor in its modification. ClaR, ClaS and ClaT are sufficient to produce clavilactone A. The biosynthesis begins with the prenyltransferase claS that transfers geranyl pyrophosphate (GPP) to hydroquinone to produces geranylhydroquinone. The cytochrome P450 monooxygenase claR then catalyzes the diradical coupling reaction between the intramolecular hydroquinone and allyl moieties to form the benzo-fused ten-membered carbocyclic ring unit of wigantol. Finally the cytochrome P450 monooxygenase claT exquisitely and stereoselectively assembles the alpha,beta-epoxy-gamma-lactone moiety, producing clavilactone A via arnebinol A. This Ampulloclitocybe clavipes (Club foot) protein is Cytochrome P450 monooxygenase claO.